A 705-amino-acid polypeptide reads, in one-letter code: DNA ligase (705 aa).

NAD(+)-binding positions include 43–47 (DAEYD), 92–93 (SL), and Asp-123. Lys-125 (N6-AMP-lysine intermediate) is an active-site residue. NAD(+)-binding residues include Arg-146, Glu-184, Lys-304, and Lys-328. The Zn(2+) site is built by Cys-422, Cys-425, Cys-440, and Cys-445. One can recognise a BRCT domain in the interval 607 to 696 (TPVTPLAGKK…EEISGQAADD (90 aa)). The segment at 684 to 705 (SESEEISGQAADDYENSLLRVQ) is disordered.

This sequence belongs to the NAD-dependent DNA ligase family. LigA subfamily. Mg(2+) is required as a cofactor. Requires Mn(2+) as cofactor.

It catalyses the reaction NAD(+) + (deoxyribonucleotide)n-3'-hydroxyl + 5'-phospho-(deoxyribonucleotide)m = (deoxyribonucleotide)n+m + AMP + beta-nicotinamide D-nucleotide.. In terms of biological role, DNA ligase that catalyzes the formation of phosphodiester linkages between 5'-phosphoryl and 3'-hydroxyl groups in double-stranded DNA using NAD as a coenzyme and as the energy source for the reaction. It is essential for DNA replication and repair of damaged DNA. This is DNA ligase from Oleidesulfovibrio alaskensis (strain ATCC BAA-1058 / DSM 17464 / G20) (Desulfovibrio alaskensis).